The following is a 455-amino-acid chain: Bifunctional protein GlmU (455 aa).

The interval 1 to 226 is pyrophosphorylase; the sequence is MGLSVVILAA…EFEILGVNDR (226 aa). UDP-N-acetyl-alpha-D-glucosamine is bound by residues 8–11, lysine 22, glutamine 73, 78–79, 99–101, glycine 136, glutamate 151, asparagine 166, and asparagine 224; these read LAAG, GT, and YGD. Position 101 (aspartate 101) interacts with Mg(2+). Asparagine 224 is a binding site for Mg(2+). Residues 227–247 are linker; that stretch reads TQLASLERVWQRNVAEKIMAK. Residues 248–455 are N-acetyltransferase; that stretch reads GVSIADPNRF…WQRPVKKTDK (208 aa). UDP-N-acetyl-alpha-D-glucosamine-binding residues include arginine 330 and lysine 348. Histidine 360 serves as the catalytic Proton acceptor. Residues tyrosine 363 and asparagine 374 each contribute to the UDP-N-acetyl-alpha-D-glucosamine site. Residues alanine 377, 383-384, serine 402, alanine 420, and arginine 437 contribute to the acetyl-CoA site; that span reads NY.

The protein in the N-terminal section; belongs to the N-acetylglucosamine-1-phosphate uridyltransferase family. It in the C-terminal section; belongs to the transferase hexapeptide repeat family. In terms of assembly, homotrimer. Requires Mg(2+) as cofactor.

The protein resides in the cytoplasm. It carries out the reaction alpha-D-glucosamine 1-phosphate + acetyl-CoA = N-acetyl-alpha-D-glucosamine 1-phosphate + CoA + H(+). It catalyses the reaction N-acetyl-alpha-D-glucosamine 1-phosphate + UTP + H(+) = UDP-N-acetyl-alpha-D-glucosamine + diphosphate. The protein operates within nucleotide-sugar biosynthesis; UDP-N-acetyl-alpha-D-glucosamine biosynthesis; N-acetyl-alpha-D-glucosamine 1-phosphate from alpha-D-glucosamine 6-phosphate (route II): step 2/2. It participates in nucleotide-sugar biosynthesis; UDP-N-acetyl-alpha-D-glucosamine biosynthesis; UDP-N-acetyl-alpha-D-glucosamine from N-acetyl-alpha-D-glucosamine 1-phosphate: step 1/1. Its pathway is bacterial outer membrane biogenesis; LPS lipid A biosynthesis. Functionally, catalyzes the last two sequential reactions in the de novo biosynthetic pathway for UDP-N-acetylglucosamine (UDP-GlcNAc). The C-terminal domain catalyzes the transfer of acetyl group from acetyl coenzyme A to glucosamine-1-phosphate (GlcN-1-P) to produce N-acetylglucosamine-1-phosphate (GlcNAc-1-P), which is converted into UDP-GlcNAc by the transfer of uridine 5-monophosphate (from uridine 5-triphosphate), a reaction catalyzed by the N-terminal domain. In Francisella tularensis subsp. novicida (strain U112), this protein is Bifunctional protein GlmU.